The following is a 1162-amino-acid chain: Paired amphipathic helix protein Sin3-like 5 (1162 aa).

The segment at 1–37 is disordered; sequence MKRVREEVYVEPQMRGPTVSSRGETNGRPSTISGGGT. A compositionally biased stretch (polar residues) spans 18-30; sequence TVSSRGETNGRPS. PAH domains follow at residues 28–109 and 123–193; these read RPST…LPKG and KPVD…LPDF. Disordered regions lie at residues 702–727, 743–779, 803–830, and 1121–1143; these read RVSD…ESCE, QKLP…DDDN, GGQV…SNEG, and KKAT…ELSR. Ser817 carries the post-translational modification Phosphoserine. Residues 1123-1139 are compositionally biased toward polar residues; that stretch reads ATLNPTGPENVKTSDSS.

It is found in the nucleus. Acts as a transcriptional repressor. Plays roles in regulating gene expression and genome stability. The chain is Paired amphipathic helix protein Sin3-like 5 (SNL5) from Arabidopsis thaliana (Mouse-ear cress).